The primary structure comprises 322 residues: Arginase-1 (322 aa).

Positions 1–27 (MSFKSQSIGIIGAPFSKGQPRGGVEEG) are disordered. Serine 7 carries the post-translational modification Phosphoserine. Lysine 17 is subject to N6-succinyllysine. The residue at position 72 (serine 72) is a Phosphoserine. N6-succinyllysine is present on lysine 75. Positions 101, 124, 126, and 128 each coordinate Mn(2+). Residues 126–130 (HTDIN) and 137–139 (TGN) each bind substrate. Residue serine 163 is modified to Phosphoserine. Aspartate 183 contacts substrate. Position 217 is a phosphoserine (serine 217). Positions 232 and 234 each coordinate Mn(2+). Residues threonine 246 and glutamate 277 each coordinate substrate.

Belongs to the arginase family. As to quaternary structure, homotrimer. Interacts with CMTM6. Requires Mn(2+) as cofactor.

It is found in the cytoplasm. The catalysed reaction is L-arginine + H2O = urea + L-ornithine. It functions in the pathway nitrogen metabolism; urea cycle; L-ornithine and urea from L-arginine: step 1/1. This is Arginase-1 (ARG1) from Sus scrofa (Pig).